The chain runs to 144 residues: Large ribosomal subunit protein uL13 (144 aa).

It belongs to the universal ribosomal protein uL13 family. As to quaternary structure, part of the 50S ribosomal subunit.

Functionally, this protein is one of the early assembly proteins of the 50S ribosomal subunit, although it is not seen to bind rRNA by itself. It is important during the early stages of 50S assembly. This Syntrophomonas wolfei subsp. wolfei (strain DSM 2245B / Goettingen) protein is Large ribosomal subunit protein uL13.